The sequence spans 242 residues: UPF0246 protein SPD_1378 (242 aa).

It belongs to the UPF0246 family.

This chain is UPF0246 protein SPD_1378, found in Streptococcus pneumoniae serotype 2 (strain D39 / NCTC 7466).